The sequence spans 367 residues: 4-hydroxy-3-methylbut-2-en-1-yl diphosphate synthase (flavodoxin) (367 aa).

Residues cysteine 270, cysteine 273, cysteine 305, and glutamate 312 each coordinate [4Fe-4S] cluster.

This sequence belongs to the IspG family. Requires [4Fe-4S] cluster as cofactor.

It catalyses the reaction (2E)-4-hydroxy-3-methylbut-2-enyl diphosphate + oxidized [flavodoxin] + H2O + 2 H(+) = 2-C-methyl-D-erythritol 2,4-cyclic diphosphate + reduced [flavodoxin]. It functions in the pathway isoprenoid biosynthesis; isopentenyl diphosphate biosynthesis via DXP pathway; isopentenyl diphosphate from 1-deoxy-D-xylulose 5-phosphate: step 5/6. Functionally, converts 2C-methyl-D-erythritol 2,4-cyclodiphosphate (ME-2,4cPP) into 1-hydroxy-2-methyl-2-(E)-butenyl 4-diphosphate. The protein is 4-hydroxy-3-methylbut-2-en-1-yl diphosphate synthase (flavodoxin) of Buchnera aphidicola subsp. Schizaphis graminum (strain Sg).